A 637-amino-acid polypeptide reads, in one-letter code: Chaperone protein DnaK (637 aa).

A Phosphothreonine; by autocatalysis modification is found at Thr-198. A disordered region spans residues Met-597–Lys-637. Gly residues predominate over residues Pro-608 to Pro-621. Residues Asp-627–Lys-637 are compositionally biased toward acidic residues.

This sequence belongs to the heat shock protein 70 family.

Its function is as follows. Acts as a chaperone. This is Chaperone protein DnaK from Syntrophus aciditrophicus (strain SB).